Reading from the N-terminus, the 357-residue chain is Fructose-1,6-bisphosphatase class 1 2 (357 aa).

Mg(2+) is bound by residues E90, D112, L114, and D115. Residues 115–118 (DGSS) and N206 each bind substrate. E278 contacts Mg(2+).

The protein belongs to the FBPase class 1 family. As to quaternary structure, homotetramer. The cofactor is Mg(2+).

It localises to the cytoplasm. The catalysed reaction is beta-D-fructose 1,6-bisphosphate + H2O = beta-D-fructose 6-phosphate + phosphate. The protein operates within carbohydrate biosynthesis; gluconeogenesis. This is Fructose-1,6-bisphosphatase class 1 2 from Dechloromonas aromatica (strain RCB).